Reading from the N-terminus, the 168-residue chain is TREKPFTCTECGKGFSDKSNLRSHQRTHTREKPFTCTECGKSFSQKIGLHNHLKCHTGEKPFMCTECGKSFSNKSNLHTHRKIHTGERPYICTECGKTFPRKKNLQSHQTVHTQEKPFTCSECGKCFSQKKNLHTHQKIHTGEKPFKCNECGQAFLRKRNLLSHERIH.

6 consecutive C2H2-type zinc fingers follow at residues 6–28 (FTCT…QRTH), 34–56 (FTCT…LKCH), 62–84 (FMCT…RKIH), 90–112 (YICT…QTVH), 118–140 (FTCS…QKIH), and 146–168 (FKCN…ERIH).

The protein belongs to the krueppel C2H2-type zinc-finger protein family.

The protein localises to the nucleus. Functionally, may be involved in transcriptional regulation. The protein is Gastrula zinc finger protein XlCGF7.1 of Xenopus laevis (African clawed frog).